A 352-amino-acid polypeptide reads, in one-letter code: Protein-glutamate methylesterase/protein-glutamine glutaminase 1 (352 aa).

The 118-residue stretch at 5 to 122 (KVLVVDDSAF…SLDVLSVKEE (118 aa)) folds into the Response regulatory domain. Position 56 is a 4-aspartylphosphate (Asp56). The CheB-type methylesterase domain maps to 155–352 (PDQDRKLNKL…EITEEVLSML (198 aa)). Residues Ser170, His197, and Asp297 contribute to the active site.

The protein belongs to the CheB family. Post-translationally, phosphorylated by CheA. Phosphorylation of the N-terminal regulatory domain activates the methylesterase activity.

It is found in the cytoplasm. It catalyses the reaction [protein]-L-glutamate 5-O-methyl ester + H2O = L-glutamyl-[protein] + methanol + H(+). The enzyme catalyses L-glutaminyl-[protein] + H2O = L-glutamyl-[protein] + NH4(+). In terms of biological role, involved in chemotaxis. Part of a chemotaxis signal transduction system that modulates chemotaxis in response to various stimuli. Catalyzes the demethylation of specific methylglutamate residues introduced into the chemoreceptors (methyl-accepting chemotaxis proteins or MCP) by CheR. Also mediates the irreversible deamidation of specific glutamine residues to glutamic acid. The sequence is that of Protein-glutamate methylesterase/protein-glutamine glutaminase 1 from Syntrophomonas wolfei subsp. wolfei (strain DSM 2245B / Goettingen).